The chain runs to 303 residues: Protoheme IX farnesyltransferase (303 aa).

7 consecutive transmembrane segments (helical) span residues 25–45 (MGLV…AIVL), 54–74 (IPQI…ACAL), 118–138 (LLFA…VGYV), 151–171 (WNTV…WTAI), 177–197 (LVAV…FYAL), 230–250 (LVVL…FIVL), and 280–300 (FIYS…ISLI).

The protein belongs to the UbiA prenyltransferase family. Protoheme IX farnesyltransferase subfamily. Interacts with CtaA.

It is found in the cell membrane. It catalyses the reaction heme b + (2E,6E)-farnesyl diphosphate + H2O = Fe(II)-heme o + diphosphate. It functions in the pathway porphyrin-containing compound metabolism; heme O biosynthesis; heme O from protoheme: step 1/1. Its function is as follows. Converts heme B (protoheme IX) to heme O by substitution of the vinyl group on carbon 2 of heme B porphyrin ring with a hydroxyethyl farnesyl side group. This chain is Protoheme IX farnesyltransferase, found in Staphylococcus saprophyticus subsp. saprophyticus (strain ATCC 15305 / DSM 20229 / NCIMB 8711 / NCTC 7292 / S-41).